Here is a 249-residue protein sequence, read N- to C-terminus: GTP cyclohydrolase 1 type 2 homolog (249 aa).

His-64, His-65, Asp-102, His-217, and Glu-221 together coordinate a divalent metal cation.

Belongs to the GTP cyclohydrolase I type 2/NIF3 family. In terms of assembly, homohexamer.

The protein is GTP cyclohydrolase 1 type 2 homolog of Neisseria meningitidis serogroup B (strain ATCC BAA-335 / MC58).